Reading from the N-terminus, the 595-residue chain is MFS-type transporter phomT (595 aa).

Residues 1–11 are compositionally biased toward basic and acidic residues; that stretch reads MESDGKSDRTK. The tract at residues 1–62 is disordered; the sequence is MESDGKSDRT…HVSADDGPVD (62 aa). A compositionally biased stretch (polar residues) spans 30–48; the sequence is PGHSTDTEGNGSDNNNTQV. Asn-39 and Asn-44 each carry an N-linked (GlcNAc...) asparagine glycan. 3 consecutive transmembrane segments (helical) span residues 91–111, 126–146, and 156–176; these read IILL…TIVA, DVGW…LFFG, and WVFL…GVAP. The N-linked (GlcNAc...) asparagine glycan is linked to Asn-177. A run of 3 helical transmembrane segments spans residues 186-206, 217-237, and 245-265; these read AVAG…IAFS, ALIS…GGVF, and WCFY…VFFL. N-linked (GlcNAc...) asparagine glycosylation occurs at Asn-277. 7 consecutive transmembrane segments (helical) span residues 290 to 310, 320 to 340, 362 to 382, 409 to 429, 451 to 471, 483 to 503, and 559 to 579; these read IGTA…QWGG, VVAL…LQFW, VFTG…PIWF, IVGG…YALP, WIGY…QGIV, AIGT…FVSV, and VIWT…AVIF.

Belongs to the major facilitator superfamily. TCR/Tet family.

The protein resides in the cell membrane. In terms of biological role, MFS-type transporter; part of the gene cluster that mediates the biosynthesis of the phomopsins, a group of hexapeptide mycotoxins which infects lupins and causes lupinosis disease in livestock. PhomT is likely to be involved in the cellular export of phomopsins. In Diaporthe leptostromiformis (Lupinosis disease fungus), this protein is MFS-type transporter phomT.